Consider the following 347-residue polypeptide: Quinolinate synthase (347 aa).

Residues histidine 47 and serine 68 each coordinate iminosuccinate. A [4Fe-4S] cluster-binding site is contributed by cysteine 113. Iminosuccinate-binding positions include 139 to 141 and serine 156; that span reads YAN. A [4Fe-4S] cluster-binding site is contributed by cysteine 200. Iminosuccinate is bound by residues 226–228 and threonine 243; that span reads HPE. Position 297 (cysteine 297) interacts with [4Fe-4S] cluster.

The protein belongs to the quinolinate synthase family. Type 1 subfamily. Requires [4Fe-4S] cluster as cofactor.

The protein localises to the cytoplasm. It carries out the reaction iminosuccinate + dihydroxyacetone phosphate = quinolinate + phosphate + 2 H2O + H(+). It participates in cofactor biosynthesis; NAD(+) biosynthesis; quinolinate from iminoaspartate: step 1/1. Catalyzes the condensation of iminoaspartate with dihydroxyacetone phosphate to form quinolinate. The polypeptide is Quinolinate synthase (Shigella flexneri serotype 5b (strain 8401)).